A 296-amino-acid polypeptide reads, in one-letter code: Nucleotide-binding protein ABC3036 (296 aa).

Residue Gly13–Ser20 participates in ATP binding. Asp64 to Gly67 provides a ligand contact to GTP.

Belongs to the RapZ-like family.

Displays ATPase and GTPase activities. This Shouchella clausii (strain KSM-K16) (Alkalihalobacillus clausii) protein is Nucleotide-binding protein ABC3036.